Consider the following 276-residue polypeptide: MPIVKAKPTSPGRRFVEKVVHPHLYKGRPHAPLVEAQGRSGGRNNNGRITSRHIGGGHKQHYRIIDFKRTKDNIPATVERIEYDPNRTAHIALLKYADGERRYIIAPKKLKVGDTVLSGEASPIRPGNCLPLKNIPVGTTISNIELKIGKGAQMARSAGASVQLLGKEGIYAILRLRSGETRRVHVNCRAVIGEVSNTENNLKSLGKAGASRWRGVRPTVRGTAMNPVDHPHGGGEGRTMGKHPTTPWGQKTKGLKTRSNKRTDSMIIRRRRAKKK.

2 disordered regions span residues 33–55 (LVEA…RHIG) and 221–276 (RGTA…AKKK).

It belongs to the universal ribosomal protein uL2 family. As to quaternary structure, part of the 50S ribosomal subunit. Forms a bridge to the 30S subunit in the 70S ribosome.

Functionally, one of the primary rRNA binding proteins. Required for association of the 30S and 50S subunits to form the 70S ribosome, for tRNA binding and peptide bond formation. It has been suggested to have peptidyltransferase activity; this is somewhat controversial. Makes several contacts with the 16S rRNA in the 70S ribosome. The protein is Large ribosomal subunit protein uL2 of Psychrobacter sp. (strain PRwf-1).